Consider the following 1485-residue polypeptide: Putative E3 ubiquitin-protein ligase LIN-2 (1485 aa).

Residues 337-353 (EENEDDSDSELDNESVD) are compositionally biased toward acidic residues. 3 disordered regions span residues 337–363 (EENE…IFSP), 384–450 (NQIP…ISNA), and 462–507 (RKND…KLSM). Residues 438–450 (SSPDISIDNISNA) are compositionally biased toward low complexity. Residues 466–484 (SQTPSMNQDNENSLVLNDS) are compositionally biased toward polar residues. The U-box domain maps to 510 to 585 (KPPKDFVCPI…TSWKEQNPEL (76 aa)). WD repeat units follow at residues 1194 to 1232 (SCKE…KVCD), 1246 to 1283 (EHTK…IKCI), 1409 to 1448 (SLST…RVAS), and 1454 to 1485 (GHTK…WALD).

It catalyses the reaction S-ubiquitinyl-[E2 ubiquitin-conjugating enzyme]-L-cysteine + [acceptor protein]-L-lysine = [E2 ubiquitin-conjugating enzyme]-L-cysteine + N(6)-ubiquitinyl-[acceptor protein]-L-lysine.. It functions in the pathway protein modification; protein ubiquitination. In terms of biological role, putative E3 ubiquitin-protein ligase involved in the rhizobial infection process. Plays an important role in the early steps of infection thread formation and in growth and differentiation of nodules. In Lotus japonicus (Lotus corniculatus var. japonicus), this protein is Putative E3 ubiquitin-protein ligase LIN-2.